The sequence spans 86 residues: Putative membrane protein insertion efficiency factor (86 aa).

The protein belongs to the UPF0161 family.

The protein resides in the cell inner membrane. Its function is as follows. Could be involved in insertion of integral membrane proteins into the membrane. This chain is Putative membrane protein insertion efficiency factor, found in Histophilus somni (strain 129Pt) (Haemophilus somnus).